Consider the following 785-residue polypeptide: Potassium transporter 5 (785 aa).

Topologically, residues methionine 1 to serine 60 are cytoplasmic. The residue at position 35 (serine 35) is a Phosphoserine. The helical transmembrane segment at leucine 61 to tyrosine 81 threads the bilayer. Residues alanine 82–glycine 97 are Extracellular-facing. The chain crosses the membrane as a helical span at residues valine 98–valine 118. Residues leucine 119–lysine 184 are Cytoplasmic-facing. Residues isoleucine 185–threonine 205 form a helical membrane-spanning segment. Over proline 206–lysine 218 the chain is Extracellular. Residues serine 219–phenylalanine 239 traverse the membrane as a helical segment. The Cytoplasmic segment spans residues glutamine 240–valine 247. A helical transmembrane segment spans residues glycine 248 to phenylalanine 268. Topologically, residues asparagine 269–glycine 297 are extracellular. The helical transmembrane segment at tryptophan 298 to leucine 318 threads the bilayer. The Cytoplasmic segment spans residues glycine 319 to glutamine 327. The helical transmembrane segment at isoleucine 328 to tyrosine 348 threads the bilayer. The Extracellular portion of the chain corresponds to leucine 349–proline 367. N-linked (GlcNAc...) asparagine glycosylation is present at asparagine 355. Residues leucine 368–isoleucine 388 traverse the membrane as a helical segment. At serine 389 to glutamine 419 the chain is on the cytoplasmic side. The helical transmembrane segment at valine 420–phenylalanine 440 threads the bilayer. The Extracellular segment spans residues arginine 441–glycine 451. The helical transmembrane segment at isoleucine 452 to isoleucine 472 threads the bilayer. Residues tryptophan 473–asparagine 476 are Cytoplasmic-facing. A helical transmembrane segment spans residues isoleucine 477–serine 497. Over valine 498 to lysine 501 the chain is Extracellular. Residues phenylalanine 502–isoleucine 522 traverse the membrane as a helical segment. At tryptophan 523–leucine 785 the chain is on the cytoplasmic side. A disordered region spans residues glycine 660–serine 699. Over residues glutamate 662 to asparagine 673 the composition is skewed to acidic residues. Residues alanine 674–proline 686 show a composition bias toward polar residues. Over residues serine 687–serine 697 the composition is skewed to low complexity.

The protein belongs to the HAK/KUP transporter (TC 2.A.72.3) family. Interacts with ILK1. Post-translationally, phosphorylated at the N-terminus (amino acids 1-95) by CIPK23. Predominantly expressed in the roots.

The protein resides in the cell membrane. Functionally, high-affinity potassium transporter. Can also transport rubidium and cesium. Is essential with AKT1 for high-affinity potassium uptake in roots during seedling establishment and postgermination growth under low potassium conditions. Mediates potassium uptake by plant roots in response to low potassium conditions, by a calcium-, CBL-, and CIPK-dependent pathway. Positively regulated by the calcium sensors calcineurin B-like genes CBL1, CBL8, CBL9 and CBL10, and by phosphorylation by CIPK23. This is Potassium transporter 5 (POT5) from Arabidopsis thaliana (Mouse-ear cress).